Here is a 402-residue protein sequence, read N- to C-terminus: Bacteriochlorophyllide c C-7(1)-hydroxylase (402 aa).

One can recognise a Radical SAM core domain in the interval 104–359 (VIGMNQDIIN…IKYQDRFDMP (256 aa)). 3 residues coordinate [4Fe-4S] cluster: Cys120, Cys129, and Cys132.

It belongs to the radical SAM superfamily. [4Fe-4S] cluster is required as a cofactor.

The enzyme catalyses a bacteriochlorophyllide c + 2 S-adenosyl-L-methionine + H2O = a bacteriochlorophyllide e + 2 5'-deoxyadenosine + 2 L-methionine + 2 H(+). The catalysed reaction is a bacteriochlorophyllide d + 2 S-adenosyl-L-methionine + H2O = a bacteriochlorophyllide f + 2 5'-deoxyadenosine + 2 L-methionine + 2 H(+). It participates in porphyrin-containing compound metabolism; bacteriochlorophyll biosynthesis. Functionally, involved in the biosynthesis of bacteriochlorophyll e (BChl e). Catalyzes two consecutive hydroxylation reactions of the C-7 methyl group of bacteriochlorophyllide c (BChlide c) to form a geminal diol intermediate that spontaneously dehydrates to produce the formyl group of bacteriochlorophyllide e (BChlide e). Also able to catalyze the same reaction for bacteriochlorophyllide d (BChlide d) to give rise to bacteriochlorophyllide f (BChlide f). This chain is Bacteriochlorophyllide c C-7(1)-hydroxylase, found in Chlorobaculum limnaeum.